Here is a 113-residue protein sequence, read N- to C-terminus: Integration host factor subunit alpha (113 aa).

Belongs to the bacterial histone-like protein family. In terms of assembly, heterodimer of an alpha and a beta chain.

This protein is one of the two subunits of integration host factor, a specific DNA-binding protein that functions in genetic recombination as well as in transcriptional and translational control. The protein is Integration host factor subunit alpha of Rhodopseudomonas palustris (strain BisA53).